Reading from the N-terminus, the 264-residue chain is Anamorsin homolog 2 (264 aa).

Positions 1 to 142 are N-terminal SAM-like domain; it reads MAATAAALAV…KVSWSMGSSF (142 aa). The linker stretch occupies residues 143 to 174; sequence PLKKATKGLPKIQIDDDSELIDEDSLLTEDDL. Residues cysteine 185, cysteine 194, cysteine 197, and cysteine 199 each coordinate [2Fe-2S] cluster. A fe-S binding site A region spans residues 185–199; that stretch reads CEVGATRKACKNCTC. The [4Fe-4S] cluster site is built by cysteine 225, cysteine 228, cysteine 236, and cysteine 239. 2 short sequence motifs (cx2C motif) span residues 225–228 and 236–239; these read CGNC and CGTC. A fe-S binding site B region spans residues 225–239; the sequence is CGNCGLGDAFRCGTC.

The protein belongs to the anamorsin family. In terms of assembly, monomer. [2Fe-2S] cluster serves as cofactor. [4Fe-4S] cluster is required as a cofactor.

Its subcellular location is the cytoplasm. It is found in the mitochondrion intermembrane space. In terms of biological role, component of the cytosolic iron-sulfur (Fe-S) protein assembly (CIA) machinery. Required for the maturation of extramitochondrial Fe-S proteins. Part of an electron transfer chain functioning in an early step of cytosolic Fe-S biogenesis, facilitating the de novo assembly of a [4Fe-4S] cluster on the cytosolic Fe-S scaffold complex. Electrons are transferred from NADPH via a FAD- and FMN-containing diflavin oxidoreductase. Together with the diflavin oxidoreductase, also required for the assembly of the diferric tyrosyl radical cofactor of ribonucleotide reductase (RNR), probably by providing electrons for reduction during radical cofactor maturation in the catalytic small subunit. The chain is Anamorsin homolog 2 from Oryza sativa subsp. indica (Rice).